The following is a 545-amino-acid chain: T-box transcription factor TBX4 (545 aa).

The T-box DNA-binding region spans 71–251; sequence LHEKELWKKF…NNPFAKGFRG (181 aa). The tract at residues 479-509 is disordered; it reads QSQVRERGPSASFPRERGLPQGCERKPPSPH. Positions 482-505 are enriched in basic and acidic residues; the sequence is VRERGPSASFPRERGLPQGCERKP. A Phosphoserine modification is found at Ser-507.

The protein localises to the nucleus. In terms of biological role, transcriptional regulator that has an essential role in the organogenesis of lungs, pelvis, and hindlimbs. The sequence is that of T-box transcription factor TBX4 (TBX4) from Homo sapiens (Human).